The chain runs to 220 residues: Putative pyrophosphatase PpaX (220 aa).

The active-site Nucleophile is aspartate 9.

This sequence belongs to the HAD-like hydrolase superfamily. PpaX family. Requires Mg(2+) as cofactor.

The catalysed reaction is diphosphate + H2O = 2 phosphate + H(+). The protein is Putative pyrophosphatase PpaX of Caldanaerobacter subterraneus subsp. tengcongensis (strain DSM 15242 / JCM 11007 / NBRC 100824 / MB4) (Thermoanaerobacter tengcongensis).